The sequence spans 63 residues: UPF0434 protein Sde_1297 (63 aa).

It belongs to the UPF0434 family.

This is UPF0434 protein Sde_1297 from Saccharophagus degradans (strain 2-40 / ATCC 43961 / DSM 17024).